Here is a 782-residue protein sequence, read N- to C-terminus: Protein PAT1 homolog 1 (782 aa).

Disordered regions lie at residues 96 to 153, 177 to 217, 332 to 372, and 460 to 481; these read GPKH…HSKP, LPES…YSAP, VREH…SKHM, and EVDS…GKHL. Low complexity predominate over residues 108–117; the sequence is SGSFSRESSS. The segment covering 208–217 has biased composition (polar residues); the sequence is GGSQLTYSAP. The span at 335–347 shows a compositional bias: basic residues; that stretch reads HKHKSSHRSRKNR. Residues 348–366 are compositionally biased toward polar residues; that stretch reads GLSQQTSDAASQKSETGLQ. The segment covering 471–481 has biased composition (basic and acidic residues); that stretch reads SGDHKGSGKHL.

Interacts with AFPH2/NINJA. In terms of tissue distribution, expressed in root vasculature, shoot apical meristem (SAM) and leaves.

Functionally, activator of mRNA decapping. Involved in mRNA decay via decapping. Involved in the regulation of root stem cell niche identity. Maintains root stem cell niche stability through the interaction with the negative regulator of jasmonate signaling AFPH2/NINJA, and the regulation of cell division. This Arabidopsis thaliana (Mouse-ear cress) protein is Protein PAT1 homolog 1.